Reading from the N-terminus, the 706-residue chain is K(+)-insensitive pyrophosphate-energized proton pump (706 aa).

A run of 5 helical transmembrane segments spans residues 1–21, 62–82, 83–103, 128–148, and 164–184; these read MTAL…AIWA, IVIF…GFAI, GAIL…RANV, GMLV…FLVY, and VALG…GGIF. K186 contributes to the substrate binding site. Mg(2+) is bound by residues D189, D193, N216, and D219. A run of 6 helical transmembrane segments spans residues 231 to 251, 261 to 281, 298 to 318, 328 to 348, 376 to 398, and 412 to 432; these read LFET…IFFA, TLPL…TFFV, IATG…LIGF, GMSL…IIWI, IQGL…AGIL, and ATAT…FGPV. Residue D434 participates in Mg(2+) binding. A run of 4 helical transmembrane segments spans residues 465-485, 516-536, 585-605, and 616-636; these read AVTK…LFAA, YVVV…AMGM, IIPS…IYAI, and AFSA…FVAI. The Ca(2+) site is built by D646, D672, and D676. Position 679 (K679) interacts with substrate. A helical membrane pass occupies residues 685–705; it reads AVNPMIKITNIVALLLLAILA.

It belongs to the H(+)-translocating pyrophosphatase (TC 3.A.10) family. K(+)-insensitive subfamily. Homodimer. It depends on Mg(2+) as a cofactor.

The protein localises to the cell inner membrane. The enzyme catalyses diphosphate + H2O + H(+)(in) = 2 phosphate + 2 H(+)(out). Its function is as follows. Proton pump that utilizes the energy of pyrophosphate hydrolysis as the driving force for proton movement across the membrane. Generates a proton motive force. The protein is K(+)-insensitive pyrophosphate-energized proton pump of Bradyrhizobium diazoefficiens (strain JCM 10833 / BCRC 13528 / IAM 13628 / NBRC 14792 / USDA 110).